A 393-amino-acid chain; its full sequence is Chalcone synthase DII (393 aa).

C164 is an active-site residue.

Belongs to the thiolase-like superfamily. Chalcone/stilbene synthases family.

It catalyses the reaction (E)-4-coumaroyl-CoA + 3 malonyl-CoA + 3 H(+) = 2',4,4',6'-tetrahydroxychalcone + 3 CO2 + 4 CoA. The protein operates within secondary metabolite biosynthesis; flavonoid biosynthesis. In terms of biological role, the primary product of this enzyme is 4,2',4',6'-tetrahydroxychalcone (also termed naringenin-chalcone or chalcone) which can under specific conditions spontaneously isomerize into naringenin. The polypeptide is Chalcone synthase DII (CHS-DII) (Ipomoea batatas (Sweet potato)).